A 91-amino-acid polypeptide reads, in one-letter code: Large ribosomal subunit protein uL29 (91 aa).

A disordered region spans residues 67–91; that stretch reads AAPLAESSAPAKTKSRARKSKKEAL. Residues 79–91 are compositionally biased toward basic residues; the sequence is TKSRARKSKKEAL.

This sequence belongs to the universal ribosomal protein uL29 family.

This Acidobacterium capsulatum (strain ATCC 51196 / DSM 11244 / BCRC 80197 / JCM 7670 / NBRC 15755 / NCIMB 13165 / 161) protein is Large ribosomal subunit protein uL29.